A 193-amino-acid chain; its full sequence is ATP synthase subunit b 1 (193 aa).

The disordered stretch occupies residues Gln-9 to Gly-28. Positions Glu-10–Thr-20 are enriched in basic and acidic residues. A helical membrane pass occupies residues Thr-40 to Leu-59.

The protein belongs to the ATPase B chain family. In terms of assembly, F-type ATPases have 2 components, F(1) - the catalytic core - and F(0) - the membrane proton channel. F(1) has five subunits: alpha(3), beta(3), gamma(1), delta(1), epsilon(1). F(0) has three main subunits: a(1), b(2) and c(10-14). The alpha and beta chains form an alternating ring which encloses part of the gamma chain. F(1) is attached to F(0) by a central stalk formed by the gamma and epsilon chains, while a peripheral stalk is formed by the delta and b chains.

Its subcellular location is the cell inner membrane. In terms of biological role, f(1)F(0) ATP synthase produces ATP from ADP in the presence of a proton or sodium gradient. F-type ATPases consist of two structural domains, F(1) containing the extramembraneous catalytic core and F(0) containing the membrane proton channel, linked together by a central stalk and a peripheral stalk. During catalysis, ATP synthesis in the catalytic domain of F(1) is coupled via a rotary mechanism of the central stalk subunits to proton translocation. Its function is as follows. Component of the F(0) channel, it forms part of the peripheral stalk, linking F(1) to F(0). The sequence is that of ATP synthase subunit b 1 from Chelativorans sp. (strain BNC1).